We begin with the raw amino-acid sequence, 156 residues long: MQTTKNQDDLVRIFKAILKEERFGSQSEIVAALQAEGFSNINQSKVSRMLSKFGAVRTRNAKQEMVYCLPAELGVPTAGSPLKNLVLDVDHNQAMIVVRTSPGAAQLIARLLDSIGKPEGILGTIAGDDTIFICPSSIQDIADTLETIKSLFNYAE.

It belongs to the ArgR family.

It is found in the cytoplasm. It participates in amino-acid biosynthesis; L-arginine biosynthesis [regulation]. Functionally, regulates arginine biosynthesis genes. The sequence is that of Arginine repressor from Shewanella sp. (strain ANA-3).